Consider the following 1125-residue polypeptide: Kinase and exchange factor for Rac B (1125 aa).

3 disordered regions span residues 50–175, 247–287, and 322–362; these read VTGG…ASIN, SVPG…GGKF, and KTRD…VNSD. Over residues 59–91 the composition is skewed to low complexity; the sequence is NNQQQQQNNNNNNNNNNNNNNNNNNNNNNNNNN. Residues 92–106 are compositionally biased toward polar residues; it reads SGEISSNNSTPSILF. Over residues 113–124 the composition is skewed to pro residues; sequence TAPPAPPQPTTP. Positions 137 to 161 are enriched in low complexity; it reads NINQQPIGGVNNNNNNNNKDSPSNK. In terms of domain architecture, DH spans 380–571; that stretch reads KRRQVSLQIL…KSTVDYVKEK (192 aa). Residues 601-822 form the PH domain; that stretch reads RYVREGMLTE…WIQAIHANII (222 aa). Disordered regions lie at residues 693-729 and 761-791; these read INNM…SNNN and SNNN…YSNG. Over residues 694 to 729 the composition is skewed to low complexity; the sequence is NNMTNNDSKSKNNNNNNSNGNNNNNNINSNSNSNNN. The Protein kinase domain occupies 848-1117; it reads IKLCEQIGSG…QLVQKLTKML (270 aa). Residues 854-862 and Lys-876 each bind ATP; that span reads IGSGGSGCT. The Proton acceptor role is filled by Asp-971.

The protein belongs to the protein kinase superfamily. STE Ser/Thr protein kinase family. Mg(2+) is required as a cofactor.

It catalyses the reaction L-seryl-[protein] + ATP = O-phospho-L-seryl-[protein] + ADP + H(+). The catalysed reaction is L-threonyl-[protein] + ATP = O-phospho-L-threonyl-[protein] + ADP + H(+). This is Kinase and exchange factor for Rac B from Dictyostelium discoideum (Social amoeba).